The primary structure comprises 1266 residues: Neuronal-glial cell adhesion molecule (1266 aa).

The first 20 residues, 1–20 (MALPMVGLLLLLLLGGPGAA), serve as a signal peptide directing secretion. The Extracellular portion of the chain corresponds to 21–1130 (ITIPPEYGAH…PQPGGGVCTK (1110 aa)). Ig-like C2-type domains follow at residues 36–128 (PELT…NVIA), 135–221 (PKEK…KEPL), 236–322 (PRLL…HSVT), 327–413 (PYWV…AFLH), 418–506 (PLRM…ALLE), and 510–597 (PTRI…AQLR). 4 disulfide bridges follow: cysteine 58-cysteine 110, cysteine 154-cysteine 205, cysteine 260-cysteine 306, and cysteine 348-cysteine 397. Asparagine 97 carries N-linked (GlcNAc...) asparagine glycosylation. 5 N-linked (GlcNAc...) asparagine glycosylation sites follow: asparagine 288, asparagine 390, asparagine 434, asparagine 472, and asparagine 498. Cysteine 441 and cysteine 490 form a disulfide bridge. An intrachain disulfide couples cysteine 532 to cysteine 581. Fibronectin type-III domains lie at 603 to 698 (PSRD…TPPA), 700 to 804 (PERN…SGED), 809 to 930 (YPEN…TPEG), 934 to 1021 (PPEE…TKPE), and 1022 to 1118 (PPSP…TNGT). The segment at 685-710 (EHHAPSAPIETPPAAPERNPGGVHGE) is disordered. 2 N-linked (GlcNAc...) asparagine glycosylation sites follow: asparagine 712 and asparagine 819. Residues 857-882 (SRRQAPPDPPQIPQSPAEDPPPFPPV) form a disordered region. The span at 862–881 (PPDPPQIPQSPAEDPPPFPP) shows a compositional bias: pro residues. The Cell attachment site signature appears at 914–916 (RGD). The tract at residues 1004–1025 (STPRERPALQTVGSTKPEPPSP) is disordered. N-linked (GlcNAc...) asparagine glycans are attached at residues asparagine 1061, asparagine 1075, asparagine 1100, and asparagine 1116. Residues 1131-1153 (GWFIGFVSSVVLLLLILLILCFI) traverse the membrane as a helical segment. Topologically, residues 1154–1266 (KRSKGGKYSV…ASPCAGPPLD (113 aa)) are cytoplasmic. The segment covering 1163–1195 (VKDKEDTQVDSEARPMKDETFGEYRSLESEAEK) has biased composition (basic and acidic residues). Residues 1163–1266 (VKDKEDTQVD…ASPCAGPPLD (104 aa)) form a disordered region. Gly residues predominate over residues 1199-1211 (SGSGAGSGVGSPG).

This sequence belongs to the immunoglobulin superfamily. L1/neurofascin/NgCAM family. As to quaternary structure, binds to itself and to axonin 1. Brain.

It is found in the cell membrane. In terms of biological role, mediates the adhesion of neurons to neurons and neurons to glia. It is involved in neuronal migration, neurite fasciculation and outgrowth. The chain is Neuronal-glial cell adhesion molecule from Gallus gallus (Chicken).